Consider the following 481-residue polypeptide: Sialic acid-binding Ig-like lectin 16 (481 aa).

The signal sequence occupies residues 1–16 (MLLLPLLLPVLGAGSL). The Extracellular portion of the chain corresponds to 17-434 (NKDPSYSLQV…VHCKSGPMTG (418 aa)). One can recognise an Ig-like V-type domain in the interval 19–122 (DPSYSLQVQR…DEAWYFFRVE (104 aa)). Disulfide bonds link C37/C174, C42/C102, C165/C216, and C259/C306. N43 and N78 each carry an N-linked (GlcNAc...) asparagine glycan. Residue R120 participates in N-acetylneuraminate binding. 3 consecutive Ig-like C2-type domains span residues 147-232 (PDVY…RTVR), 238-322 (LELQ…LDLS), and 327-424 (PENL…LSFS). 2 N-linked (GlcNAc...) asparagine glycosylation sites follow: N338 and N347. C363 and C408 form a disulfide bridge. The helical transmembrane segment at 435-455 (VVLVAVGEVAMKILLLCLCLI) threads the bilayer. The Cytoplasmic portion of the chain corresponds to 456–481 (LLRVRSCRRKAARAALGMEAADAVTD).

The protein belongs to the immunoglobulin superfamily. SIGLEC (sialic acid binding Ig-like lectin) family. In terms of tissue distribution, expressed in bone marrow, fetal brain, fetal liver, lung and salivary gland. Detected in brain, macrophage, cancerous esophagus and lung at protein level.

It localises to the membrane. In terms of biological role, putative adhesion molecule that mediates sialic-acid dependent binding to cells. This is Sialic acid-binding Ig-like lectin 16 (SIGLEC16) from Homo sapiens (Human).